The following is a 157-amino-acid chain: Vesicle transport protein SFT2B (157 aa).

The residue at position 1 (Met1) is an N-acetylmethionine. Over 1–36 (MDKLKKVLSGQDTEDRSGLSEVVESSSLSWSTRIKG) the chain is Cytoplasmic. At Ser9 the chain carries Phosphoserine. Residues 37 to 57 (FIVCFALGILCSLLGTLLLWV) traverse the membrane as a helical segment. At 58–61 (SRKG) the chain is on the lumenal side. A helical membrane pass occupies residues 62–82 (LFAVFYTLGNITSIGSTMFLM). Over 83-96 (GPLKQLKRMFEPTR) the chain is Cytoplasmic. Residues 97–117 (LIATILVLLFFVLTLCSAFLW) traverse the membrane as a helical segment. The Lumenal segment spans residues 118–120 (NKG). Residues 121–141 (LALIFCILQSLALTWYSLSYI) traverse the membrane as a helical segment. At 142–157 (PYARDAVKKCFAVCLT) the chain is on the cytoplasmic side.

It belongs to the SFT2 family.

The protein resides in the membrane. Functionally, may be involved in fusion of retrograde transport vesicles derived from an endocytic compartment with the Golgi complex. The protein is Vesicle transport protein SFT2B of Rattus norvegicus (Rat).